Consider the following 348-residue polypeptide: 3-isopropylmalate dehydrogenase (348 aa).

Residue 76-87 (GPKWTDPNNRPE) coordinates NAD(+). Arg-94, Arg-104, Arg-132, and Asp-217 together coordinate substrate. The Mg(2+) site is built by Asp-217, Asp-241, and Asp-245. Residue 275-287 (GSAPDIAGKNVAN) coordinates NAD(+).

Belongs to the isocitrate and isopropylmalate dehydrogenases family. LeuB type 1 subfamily. In terms of assembly, homodimer. Requires Mg(2+) as cofactor. The cofactor is Mn(2+).

The protein localises to the cytoplasm. The enzyme catalyses (2R,3S)-3-isopropylmalate + NAD(+) = 4-methyl-2-oxopentanoate + CO2 + NADH. The protein operates within amino-acid biosynthesis; L-leucine biosynthesis; L-leucine from 3-methyl-2-oxobutanoate: step 3/4. In terms of biological role, catalyzes the oxidation of 3-carboxy-2-hydroxy-4-methylpentanoate (3-isopropylmalate) to 3-carboxy-4-methyl-2-oxopentanoate. The product decarboxylates to 4-methyl-2 oxopentanoate. In Staphylococcus aureus (strain bovine RF122 / ET3-1), this protein is 3-isopropylmalate dehydrogenase.